The chain runs to 240 residues: tRNA pseudouridine synthase B (240 aa).

Asp54 acts as the Nucleophile in catalysis.

Belongs to the pseudouridine synthase TruB family. Type 1 subfamily.

The catalysed reaction is uridine(55) in tRNA = pseudouridine(55) in tRNA. Functionally, responsible for synthesis of pseudouridine from uracil-55 in the psi GC loop of transfer RNAs. In Chlorobium phaeovibrioides (strain DSM 265 / 1930) (Prosthecochloris vibrioformis (strain DSM 265)), this protein is tRNA pseudouridine synthase B.